The primary structure comprises 957 residues: Receptor-like protein 34 (957 aa).

Residues Met-1–Ala-31 form the signal peptide. Residues Ala-32 to Trp-910 lie on the Extracellular side of the membrane. 7 N-linked (GlcNAc...) asparagine glycosylation sites follow: Asn-78, Asn-101, Asn-114, Asn-143, Asn-167, Asn-191, and Asn-215. 18 LRR repeats span residues Leu-120–Asn-143, Leu-144–Asn-167, Leu-168–Leu-192, His-194–Leu-216, Ser-217–Leu-240, Ser-241–Leu-264, Gln-266–Asn-287, Leu-288–Leu-312, Thr-313–Leu-336, Asn-338–Ile-360, Pro-361–Ser-384, Ser-386–Leu-409, Leu-412–His-434, Leu-435–Tyr-459, Phe-460–Ser-483, Ser-487–Gln-510, His-511–Leu-534, and Pro-535–Glu-557. N-linked (GlcNAc...) asparagine glycosylation is found at Asn-242 and Asn-263. N-linked (GlcNAc...) asparagine glycosylation is found at Asn-311 and Asn-332. A glycan (N-linked (GlcNAc...) asparagine) is linked at Asn-381. An N-linked (GlcNAc...) asparagine glycan is attached at Asn-477. Asn-541, Asn-544, Asn-569, Asn-593, Asn-608, and Asn-618 each carry an N-linked (GlcNAc...) asparagine glycan. The stretch at Pro-558–Glu-580 is one LRR 19; degenerate repeat. 10 LRR repeats span residues Leu-581–Leu-605, Lys-606–Ser-630, Arg-632–Phe-652, Ser-653–Ser-675, Gln-677–Phe-698, Pro-699–Glu-722, Leu-765–Leu-789, Lys-790–Leu-813, Ala-815–Leu-837, and Leu-839–Thr-862. Asn-712 carries an N-linked (GlcNAc...) asparagine glycan. N-linked (GlcNAc...) asparagine glycosylation is found at Asn-796, Asn-812, Asn-836, and Asn-844. A helical membrane pass occupies residues Ile-911 to Leu-931. Topologically, residues Val-932–His-957 are cytoplasmic.

This sequence belongs to the RLP family.

The protein resides in the cell membrane. The chain is Receptor-like protein 34 from Arabidopsis thaliana (Mouse-ear cress).